The chain runs to 559 residues: Formate--tetrahydrofolate ligase (559 aa).

68–75 (TPAGEGKT) is an ATP binding site.

Belongs to the formate--tetrahydrofolate ligase family.

It carries out the reaction (6S)-5,6,7,8-tetrahydrofolate + formate + ATP = (6R)-10-formyltetrahydrofolate + ADP + phosphate. The protein operates within one-carbon metabolism; tetrahydrofolate interconversion. The sequence is that of Formate--tetrahydrofolate ligase from Sinorhizobium fredii (strain NBRC 101917 / NGR234).